Consider the following 414-residue polypeptide: Putative nickel insertion protein (414 aa).

A disordered region spans residues 70-91 (ATHHDHDHSQDQTHHHHADHAP).

Belongs to the LarC family.

The sequence is that of Putative nickel insertion protein from Picosynechococcus sp. (strain ATCC 27264 / PCC 7002 / PR-6) (Agmenellum quadruplicatum).